We begin with the raw amino-acid sequence, 99 residues long: Aspartyl/glutamyl-tRNA(Asn/Gln) amidotransferase subunit C (99 aa).

The protein belongs to the GatC family. In terms of assembly, heterotrimer of A, B and C subunits.

The enzyme catalyses L-glutamyl-tRNA(Gln) + L-glutamine + ATP + H2O = L-glutaminyl-tRNA(Gln) + L-glutamate + ADP + phosphate + H(+). It catalyses the reaction L-aspartyl-tRNA(Asn) + L-glutamine + ATP + H2O = L-asparaginyl-tRNA(Asn) + L-glutamate + ADP + phosphate + 2 H(+). Allows the formation of correctly charged Asn-tRNA(Asn) or Gln-tRNA(Gln) through the transamidation of misacylated Asp-tRNA(Asn) or Glu-tRNA(Gln) in organisms which lack either or both of asparaginyl-tRNA or glutaminyl-tRNA synthetases. The reaction takes place in the presence of glutamine and ATP through an activated phospho-Asp-tRNA(Asn) or phospho-Glu-tRNA(Gln). This Burkholderia mallei (strain NCTC 10247) protein is Aspartyl/glutamyl-tRNA(Asn/Gln) amidotransferase subunit C.